We begin with the raw amino-acid sequence, 1094 residues long: Formin-like protein 1 (1094 aa).

Disordered regions lie at residues 1-29, 173-199, and 507-627; these read MGNA…KQPM, SGAE…VPKS, and AATP…GVKA. G2 is lipidated: N-myristoyl glycine. At S7 the chain carries Phosphoserine. Pro residues predominate over residues 16 to 28; that stretch reads ASPPKQPAVPKQP. The region spanning 27–464 is the GBD/FH3 domain; it reads QPMPAAGELE…SRRIPEPEKV (438 aa). S184 is modified (phosphoserine). Residues 519 to 529 show a composition bias toward polar residues; that stretch reads RVSTDSPSTAE. Composition is skewed to pro residues over residues 535–549 and 559–610; these read ASPP…PPLP and PSAP…PGGP. Positions 627 to 1018 constitute an FH2 domain; sequence AKKPIQTKFR…DTSGREEPPT (392 aa). Phosphoserine is present on S688. The segment covering 1002 to 1017 has biased composition (basic and acidic residues); that stretch reads WKKEAAADTSGREEPP. The disordered stretch occupies residues 1002 to 1094; that stretch reads WKKEAAADTS…PLPVTTDLAL (93 aa). S1021 carries the phosphoserine modification. The 34-residue stretch at 1049–1082 folds into the DAD domain; that stretch reads SDRDGAIEDIITDLRNQPYIRADTGRRSARRRPP.

Belongs to the formin homology family. In terms of assembly, interacts with RAC1, PFN1 and PFN2. Interacts (activated by RAC1) with SRGAP2 (via SH3 domain); regulates the actin filament severing activity of FMNL1. Myristoylation mediates membrane localization. In terms of tissue distribution, highly expressed in the spleen, lymph node and bone marrow cells.

The protein resides in the cytoplasm. Its subcellular location is the cell membrane. It localises to the cytoplasmic vesicle. The protein localises to the phagosome. Its function is as follows. Plays a role in the regulation of cell morphology and cytoskeletal organization. Required in the cortical actin filament dynamics and cell shape. May play a role in the control of cell motility and survival of macrophages. This chain is Formin-like protein 1 (Fmnl1), found in Mus musculus (Mouse).